The following is a 184-amino-acid chain: Photosystem I assembly protein Ycf4 (184 aa).

2 helical membrane passes run Asn21 to Tyr43 and Ile58 to Leu80.

The protein belongs to the Ycf4 family.

The protein resides in the plastid. It localises to the chloroplast thylakoid membrane. Its function is as follows. Seems to be required for the assembly of the photosystem I complex. This Calycanthus floridus var. glaucus (Eastern sweetshrub) protein is Photosystem I assembly protein Ycf4.